Reading from the N-terminus, the 72-residue chain is MSLYWNRKKSDTEKTRPMDIFLVSDFIVYYRRNMIANLMNDYRTLSIRVSCLNINKNWNLNRALYLLNIKNT.

This is an uncharacterized protein from Schizosaccharomyces pombe (strain 972 / ATCC 24843) (Fission yeast).